Reading from the N-terminus, the 166-residue chain is MAEVSKKRCEHNSDSQCEGCKANDKACEARDKTKETAGSAKDKTKETAGSAKDKTKETAESAKDKTKETAGSAKDKTKETAESAKDKTKETAGSAKDKTKETAESAKDKTKETAGNVRDNVENKDKNEVYENIKEGGSKAWNKTKEVANSMKDGIKDLANKDEQKK.

3 stretches are compositionally biased toward basic and acidic residues: residues 1–13 (MAEV…EHNS), 21–112 (KAND…KTKE), and 119–137 (DNVE…KEGG). The disordered stretch occupies residues 1 to 144 (MAEVSKKRCE…EGGSKAWNKT (144 aa)). A run of 8 repeats spans residues 31 to 41 (DKTKETAGSAK), 42 to 52 (DKTKETAGSAK), 53 to 63 (DKTKETAESAK), 64 to 74 (DKTKETAGSAK), 75 to 85 (DKTKETAESAK), 86 to 96 (DKTKETAGSAK), 97 to 107 (DKTKETAESAK), and 108 to 118 (DKTKETAGNVR). The interval 31 to 118 (DKTKETAGSA…KTKETAGNVR (88 aa)) is 8 X 11 AA approximate tandem repeats of D-K-T-K-E-T-A-G/E-S-A-K.

It belongs to the LEA type 1 family.

This is an uncharacterized protein from Encephalitozoon cuniculi (strain GB-M1) (Microsporidian parasite).